A 137-amino-acid chain; its full sequence is Transcription antitermination protein NusB (137 aa).

This sequence belongs to the NusB family.

Its function is as follows. Involved in transcription antitermination. Required for transcription of ribosomal RNA (rRNA) genes. Binds specifically to the boxA antiterminator sequence of the ribosomal RNA (rrn) operons. This Proteus mirabilis (strain HI4320) protein is Transcription antitermination protein NusB.